The primary structure comprises 358 residues: Peptide chain release factor 1 (358 aa).

Gln235 is modified (N5-methylglutamine).

The protein belongs to the prokaryotic/mitochondrial release factor family. In terms of processing, methylated by PrmC. Methylation increases the termination efficiency of RF1.

It is found in the cytoplasm. Functionally, peptide chain release factor 1 directs the termination of translation in response to the peptide chain termination codons UAG and UAA. In Neisseria gonorrhoeae (strain ATCC 700825 / FA 1090), this protein is Peptide chain release factor 1.